Consider the following 457-residue polypeptide: Vasoactive intestinal polypeptide receptor 1 (457 aa).

The N-terminal stretch at 1 to 30 (MRPPSPLPARWLCVLAGALAWALGPAGGQA) is a signal peptide. The Extracellular portion of the chain corresponds to 31-141 (ARLQEECDYV…DEQQTMFYGS (111 aa)). 5 cysteine pairs are disulfide-bonded: cysteine 37-cysteine 208, cysteine 50-cysteine 72, cysteine 63-cysteine 105, cysteine 86-cysteine 122, and cysteine 215-cysteine 285. N-linked (GlcNAc...) asparagine glycosylation is found at asparagine 58, asparagine 69, and asparagine 100. Residues 142–166 (VKTGYTIGYGLSLATLLVATAILSL) traverse the membrane as a helical segment. Residues 167–174 (FRKLHCTR) lie on the Cytoplasmic side of the membrane. A helical membrane pass occupies residues 175–196 (NYIHMHLFISFILRAAAVFIKD). At 197 to 216 (LALFDSGESDQCSEGSVGCK) the chain is on the extracellular side. The helical transmembrane segment at 217–241 (AAMVFFQYCVMANFFWLLVEGLYLY) threads the bilayer. Over 242 to 254 (TLLAVSFFSERKY) the chain is Cytoplasmic. A helical membrane pass occupies residues 255 to 276 (FWGYILIGWGVPSTFTMVWTIA). Over 277 to 291 (RIHFEDYGCWDTINS) the chain is Extracellular. Residue asparagine 290 is glycosylated (N-linked (GlcNAc...) asparagine). A helical transmembrane segment spans residues 292–316 (SLWWIIKGPILTSILVNFILFICII). Topologically, residues 317–338 (RILLQKLRPPDIRKSDSSPYSR) are cytoplasmic. A helical transmembrane segment spans residues 339–359 (LARSTLLLIPLFGVHYIMFAF). At 360–367 (FPDNFKPE) the chain is on the extracellular side. A helical membrane pass occupies residues 368–391 (VKMVFELVVGSFQGFVVAILYCFL). The Cytoplasmic portion of the chain corresponds to 392–457 (NGEVQAELRR…SSFQAEVSLV (66 aa)).

This sequence belongs to the G-protein coupled receptor 2 family. In terms of assembly, interacts with ADCYAP1/PACAP; activated by both PACAP27 and PACAP38 neuropeptides. Interacts with VIP; the interaction results in VIPR1 activation. In terms of tissue distribution, in lung, HT-29 colonic epithelial cells, Raji B-lymphoblasts. Lesser extent in brain, heart, kidney, liver and placenta. Not expressed in CD4+ or CD8+ T-cells. Expressed in the T-cell lines HARRIS, HuT 78, Jurkat and SUP-T1, but not in the T-cell lines Peer, MOLT-4, HSB and YT.

Its subcellular location is the cell membrane. Functionally, g protein-coupled receptor activated by the neuropeptides vasoactive intestinal peptide (VIP) and pituitary adenylate cyclase-activating polypeptide (ADCYAP1/PACAP). Binds VIP and both PACAP27 and PACAP38 bioactive peptides with the following order of ligand affinity VIP = PACAP27 &gt; PACAP38. Ligand binding causes a conformation change that triggers signaling via guanine nucleotide-binding proteins (G proteins) and modulates the activity of downstream effectors. Activates cAMP-dependent pathway. The polypeptide is Vasoactive intestinal polypeptide receptor 1 (Homo sapiens (Human)).